Consider the following 51-residue polypeptide: Large ribosomal subunit protein eL39 (51 aa).

It belongs to the eukaryotic ribosomal protein eL39 family.

In terms of biological role, binds specifically to a region in 26S rRNA near the subunit interface. In Sulfolobus acidocaldarius (strain ATCC 33909 / DSM 639 / JCM 8929 / NBRC 15157 / NCIMB 11770), this protein is Large ribosomal subunit protein eL39 (rpl39e).